The sequence spans 331 residues: MSQYVICALYKFVALDNFEALRAPLLEVMEKNEVKGTLLLAREGVNGTVSGTREGMDALLAWLKSDPRLADLSYKESYDENIPFYRTKVKLKKEIVTMGVEGIDPKRVVGTYVKPQDWNALITDPEVLLIDTRNDYEVQIGKFKNAINPNTETFREFPDYVKSNLDPAKHKKVAMYCTGGIRCEKSTAYLKELGFEDVYHLEGGILKYLEDVPQEESTWEGECFVFDNRVAVDHSLNKGSYDQCHACRMPISAEDMQSEHYKKGVSCPHCYDKVSEDQLRRFAAREQQIELAKSRGEEHIGSEAAKAIKKRQAEKKLKRKNYHQHLTQGAE.

The region spanning 123–217 (TDPEVLLIDT…YLEDVPQEES (95 aa)) is the Rhodanese domain. Cysteine 177 acts as the Cysteine persulfide intermediate in catalysis. Residues 293 to 331 (KSRGEEHIGSEAAKAIKKRQAEKKLKRKNYHQHLTQGAE) form a disordered region. Basic residues predominate over residues 307-323 (AIKKRQAEKKLKRKNYH).

This sequence belongs to the TrhO family.

It carries out the reaction uridine(34) in tRNA + AH2 + O2 = 5-hydroxyuridine(34) in tRNA + A + H2O. Catalyzes oxygen-dependent 5-hydroxyuridine (ho5U) modification at position 34 in tRNAs. The chain is tRNA uridine(34) hydroxylase from Hahella chejuensis (strain KCTC 2396).